The following is a 618-amino-acid chain: GMC oxidoreductase family protein Mala s 12 (618 aa).

Residues 1-23 form the signal peptide; the sequence is MKGIVSWAVVSAALVLSATESLA. The FAD site is built by Val-129 and Val-280. The active-site Proton donor is the His-556. Catalysis depends on His-599, which acts as the Proton acceptor.

Belongs to the GMC oxidoreductase family. In terms of assembly, monomer. The cofactor is FAD.

The protein resides in the secreted. The sequence is that of GMC oxidoreductase family protein Mala s 12 from Malassezia sympodialis (strain ATCC 42132) (Atopic eczema-associated yeast).